The sequence spans 160 residues: Cyclic pyranopterin monophosphate synthase (160 aa).

Substrate-binding positions include 75–77 (LCH) and 113–114 (ME). D128 is an active-site residue.

The protein belongs to the MoaC family. Homohexamer; trimer of dimers.

It carries out the reaction (8S)-3',8-cyclo-7,8-dihydroguanosine 5'-triphosphate = cyclic pyranopterin phosphate + diphosphate. It functions in the pathway cofactor biosynthesis; molybdopterin biosynthesis. In terms of biological role, catalyzes the conversion of (8S)-3',8-cyclo-7,8-dihydroguanosine 5'-triphosphate to cyclic pyranopterin monophosphate (cPMP). This Methylobacterium nodulans (strain LMG 21967 / CNCM I-2342 / ORS 2060) protein is Cyclic pyranopterin monophosphate synthase.